Reading from the N-terminus, the 314-residue chain is 4-hydroxy-3-methylbut-2-enyl diphosphate reductase (314 aa).

C12 is a [4Fe-4S] cluster binding site. Positions 43 and 81 each coordinate (2E)-4-hydroxy-3-methylbut-2-enyl diphosphate. The dimethylallyl diphosphate site is built by H43 and H81. Positions 43 and 81 each coordinate isopentenyl diphosphate. C103 contributes to the [4Fe-4S] cluster binding site. H131 provides a ligand contact to (2E)-4-hydroxy-3-methylbut-2-enyl diphosphate. Residue H131 participates in dimethylallyl diphosphate binding. H131 is a binding site for isopentenyl diphosphate. E133 (proton donor) is an active-site residue. T170 is a binding site for (2E)-4-hydroxy-3-methylbut-2-enyl diphosphate. [4Fe-4S] cluster is bound at residue C198. Positions 226, 228, and 271 each coordinate (2E)-4-hydroxy-3-methylbut-2-enyl diphosphate. Residues S226, N228, and S271 each contribute to the dimethylallyl diphosphate site. 3 residues coordinate isopentenyl diphosphate: S226, N228, and S271.

Belongs to the IspH family. Requires [4Fe-4S] cluster as cofactor.

It carries out the reaction isopentenyl diphosphate + 2 oxidized [2Fe-2S]-[ferredoxin] + H2O = (2E)-4-hydroxy-3-methylbut-2-enyl diphosphate + 2 reduced [2Fe-2S]-[ferredoxin] + 2 H(+). The catalysed reaction is dimethylallyl diphosphate + 2 oxidized [2Fe-2S]-[ferredoxin] + H2O = (2E)-4-hydroxy-3-methylbut-2-enyl diphosphate + 2 reduced [2Fe-2S]-[ferredoxin] + 2 H(+). The protein operates within isoprenoid biosynthesis; dimethylallyl diphosphate biosynthesis; dimethylallyl diphosphate from (2E)-4-hydroxy-3-methylbutenyl diphosphate: step 1/1. It participates in isoprenoid biosynthesis; isopentenyl diphosphate biosynthesis via DXP pathway; isopentenyl diphosphate from 1-deoxy-D-xylulose 5-phosphate: step 6/6. In terms of biological role, catalyzes the conversion of 1-hydroxy-2-methyl-2-(E)-butenyl 4-diphosphate (HMBPP) into a mixture of isopentenyl diphosphate (IPP) and dimethylallyl diphosphate (DMAPP). Acts in the terminal step of the DOXP/MEP pathway for isoprenoid precursor biosynthesis. The chain is 4-hydroxy-3-methylbut-2-enyl diphosphate reductase from Bacillus licheniformis (strain ATCC 14580 / DSM 13 / JCM 2505 / CCUG 7422 / NBRC 12200 / NCIMB 9375 / NCTC 10341 / NRRL NRS-1264 / Gibson 46).